A 172-amino-acid polypeptide reads, in one-letter code: Protein-export protein SecB (172 aa).

The protein belongs to the SecB family. Homotetramer, a dimer of dimers. One homotetramer interacts with 1 SecA dimer.

Its subcellular location is the cytoplasm. Its function is as follows. One of the proteins required for the normal export of preproteins out of the cell cytoplasm. It is a molecular chaperone that binds to a subset of precursor proteins, maintaining them in a translocation-competent state. It also specifically binds to its receptor SecA. The protein is Protein-export protein SecB of Stenotrophomonas maltophilia (strain K279a).